Here is an 85-residue protein sequence, read N- to C-terminus: Small ribosomal subunit protein uS17 (85 aa).

It belongs to the universal ribosomal protein uS17 family. Part of the 30S ribosomal subunit.

One of the primary rRNA binding proteins, it binds specifically to the 5'-end of 16S ribosomal RNA. The sequence is that of Small ribosomal subunit protein uS17 from Desulforudis audaxviator (strain MP104C).